Consider the following 64-residue polypeptide: Conotoxin Mr3.5 (64 aa).

The signal sequence occupies residues 1 to 19; it reads MSKLGVLLTICLLLFPLTA. The propeptide occupies 20-46; it reads LPLDGDQPADQRAERTQAEKHSLPDPR. 3 disulfides stabilise this stretch: Cys49-Cys58, Cys50-Cys62, and Cys54-Cys63. Residue Cys63 is modified to Cysteine amide.

It belongs to the conotoxin M superfamily. In terms of tissue distribution, expressed by the venom duct.

It localises to the secreted. The polypeptide is Conotoxin Mr3.5 (Conus marmoreus (Marble cone)).